The sequence spans 111 residues: uncharacterized protein (111 aa).

This is an uncharacterized protein from Ureaplasma parvum serovar 3 (strain ATCC 700970).